A 159-amino-acid polypeptide reads, in one-letter code: Na(+)/H(+) antiporter subunit E1 (159 aa).

Transmembrane regions (helical) follow at residues 1–21 (MAIQ…VTNS), 27–47 (FVLG…VLPG), 60–80 (LIIT…KIIL), and 101–121 (WQLV…VLGI).

It belongs to the CPA3 antiporters (TC 2.A.63) subunit E family. May form a heterooligomeric complex that consists of seven subunits: mnhA1, mnhB1, mnhC1, mnhD1, mnhE1, mnhF1 and mnhG1.

It is found in the cell membrane. In terms of biological role, mnh complex is a Na(+)/H(+) antiporter involved in Na(+) excretion. This Staphylococcus epidermidis (strain ATCC 35984 / DSM 28319 / BCRC 17069 / CCUG 31568 / BM 3577 / RP62A) protein is Na(+)/H(+) antiporter subunit E1 (mnhE1).